The primary structure comprises 194 residues: RNA polymerase II subunit A C-terminal domain phosphatase SSU72 like protein 5 (194 aa).

This sequence belongs to the SSU72 phosphatase family.

It is found in the nucleus. The enzyme catalyses O-phospho-L-seryl-[protein] + H2O = L-seryl-[protein] + phosphate. The catalysed reaction is O-phospho-L-threonyl-[protein] + H2O = L-threonyl-[protein] + phosphate. In terms of biological role, protein phosphatase that catalyzes the dephosphorylation of the C-terminal domain of RNA polymerase II. Plays a role in RNA processing and termination. The sequence is that of RNA polymerase II subunit A C-terminal domain phosphatase SSU72 like protein 5 from Homo sapiens (Human).